The sequence spans 23 residues: Basic phospholipase A2 CB2 (23 aa).

Ca(2+) serves as cofactor. In terms of processing, contains 7 disulfide bonds. As to expression, expressed by the venom gland.

Its subcellular location is the secreted. It catalyses the reaction a 1,2-diacyl-sn-glycero-3-phosphocholine + H2O = a 1-acyl-sn-glycero-3-phosphocholine + a fatty acid + H(+). Functionally, snake venom phospholipase A2 (PLA2) that shows presynaptic neurotoxicity. PLA2 catalyzes the calcium-dependent hydrolysis of the 2-acyl groups in 3-sn-phosphoglycerides. The chain is Basic phospholipase A2 CB2 from Crotalus durissus cumanensis (South American rattlesnake).